The primary structure comprises 194 residues: Orotate phosphoribosyltransferase (194 aa).

Residue 117–125 (EDIVSTGLS) participates in 5-phospho-alpha-D-ribose 1-diphosphate binding. 2 residues coordinate orotate: serine 121 and arginine 149.

This sequence belongs to the purine/pyrimidine phosphoribosyltransferase family. PyrE subfamily. Homodimer. It depends on Mg(2+) as a cofactor.

It catalyses the reaction orotidine 5'-phosphate + diphosphate = orotate + 5-phospho-alpha-D-ribose 1-diphosphate. The protein operates within pyrimidine metabolism; UMP biosynthesis via de novo pathway; UMP from orotate: step 1/2. Functionally, catalyzes the transfer of a ribosyl phosphate group from 5-phosphoribose 1-diphosphate to orotate, leading to the formation of orotidine monophosphate (OMP). The protein is Orotate phosphoribosyltransferase of Maricaulis maris (strain MCS10) (Caulobacter maris).